The chain runs to 352 residues: Protein RecA (352 aa).

An ATP-binding site is contributed by 66–73 (GPESSGKT).

This sequence belongs to the RecA family.

It localises to the cytoplasm. Its function is as follows. Can catalyze the hydrolysis of ATP in the presence of single-stranded DNA, the ATP-dependent uptake of single-stranded DNA by duplex DNA, and the ATP-dependent hybridization of homologous single-stranded DNAs. It interacts with LexA causing its activation and leading to its autocatalytic cleavage. This is Protein RecA from Psychrobacter arcticus (strain DSM 17307 / VKM B-2377 / 273-4).